A 181-amino-acid polypeptide reads, in one-letter code: Type II secretion system protein H (181 aa).

A propeptide spans 1 to 5 (MRQRG) (leader sequence). N-methylphenylalanine is present on Phe-6. The helical transmembrane segment at 6–29 (FTLLEIMLVVLLAGVAATLVMMAI) threads the bilayer.

This sequence belongs to the GSP H family. As to quaternary structure, type II secretion is composed of four main components: the outer membrane complex, the inner membrane complex, the cytoplasmic secretion ATPase and the periplasm-spanning pseudopilus. Interacts with core component OutG. Post-translationally, cleaved by prepilin peptidase. In terms of processing, methylated by prepilin peptidase at the amino group of the N-terminal phenylalanine once the leader sequence is cleaved by prepilin peptidase.

It localises to the cell inner membrane. Component of the type II secretion system required for the energy-dependent secretion of extracellular factors such as proteases and toxins from the periplasm. Part of the pseudopilus tip complex that is critical for the recognition and binding of secretion substrates. In Dickeya chrysanthemi (Pectobacterium chrysanthemi), this protein is Type II secretion system protein H (outH).